We begin with the raw amino-acid sequence, 240 residues long: CRISPR-associated protein Cas5 3 (240 aa).

Belongs to the CRISPR-associated protein Cas5 family. Subtype I-A/Apern subfamily. In terms of assembly, part of the aCascade ribonucleoprotein complex.

Functionally, CRISPR (clustered regularly interspaced short palindromic repeat) is an adaptive immune system that provides protection against mobile genetic elements (viruses, transposable elements and conjugative plasmids). CRISPR clusters contain spacers, sequences complementary to antecedent mobile elements, and target invading nucleic acids. CRISPR clusters are transcribed and processed into CRISPR RNA (crRNA). This Saccharolobus solfataricus (strain ATCC 35092 / DSM 1617 / JCM 11322 / P2) (Sulfolobus solfataricus) protein is CRISPR-associated protein Cas5 3 (cas5c).